Here is a 142-residue protein sequence, read N- to C-terminus: HTH-type transcriptional regulator MntR (142 aa).

An HTH dtxR-type domain is found at 1-63 (MTTPSMEDYI…YEKYRGLVLT (63 aa)). Aspartate 8, glutamate 11, histidine 77, glutamate 99, glutamate 102, and histidine 103 together coordinate Cd(2+). Mn(2+) contacts are provided by aspartate 8, glutamate 11, histidine 77, glutamate 99, glutamate 102, and histidine 103.

This sequence belongs to the DtxR/MntR family. Homodimer.

The protein resides in the cytoplasm. DNA binding is strongly activated by Mn(2+) and Cd(2+), but it is poorly activated by non-cognate metal cations, including Co(2+), Fe(2+), Ni(2+), Ca(2+) and Zn(2+). In the strict absence of divalent transition metal ions, MntR has a low affinity for DNA. Central regulator of manganese homeostasis that regulates the expression of both manganese uptake and efflux systems. In the presence of high levels of manganese, it mediates repression of the manganese uptake systems MntH and MntABCD and activation of the efflux systems MneP and MneS. Binds with high affinity to the regulatory regions of its target genes. The manganese concentration required for activation of efflux is higher than that for repression of uptake. This is HTH-type transcriptional regulator MntR from Bacillus subtilis (strain 168).